The chain runs to 237 residues: Fluoroquinolones export permease protein MT2761 (237 aa).

6 helical membrane passes run 20 to 40 (FLHA…PMPV), 49 to 69 (YVLV…TVFF), 96 to 116 (VLLA…HGLG), 119 to 139 (LLPL…VGFS), 147 to 167 (VTDW…PPVV), and 199 to 219 (LAPW…AGLC).

As to quaternary structure, the complex is composed of 2 ATP-binding proteins and 2 transmembrane proteins.

It is found in the cell membrane. In terms of biological role, part of the ABC transporter complex involved in fluoroquinolones export. Probably responsible for the translocation of the substrate across the membrane. In Mycobacterium tuberculosis (strain CDC 1551 / Oshkosh), this protein is Fluoroquinolones export permease protein MT2761.